The sequence spans 118 residues: Basic phospholipase A2 PA-11 (118 aa).

Intrachain disulfides connect Cys11–Cys71, Cys27–Cys117, Cys29–Cys45, Cys44–Cys98, Cys51–Cys91, Cys60–Cys84, and Cys78–Cys89. Ca(2+)-binding residues include Tyr28, Gly30, and Gly32. The active site involves His48. A Ca(2+)-binding site is contributed by Asp49. Asp92 is a catalytic residue.

The protein belongs to the phospholipase A2 family. Group I subfamily. D49 sub-subfamily. Ca(2+) serves as cofactor. As to expression, expressed by the venom gland.

The protein resides in the secreted. The enzyme catalyses a 1,2-diacyl-sn-glycero-3-phosphocholine + H2O = a 1-acyl-sn-glycero-3-phosphocholine + a fatty acid + H(+). Functionally, PLA2 catalyzes the calcium-dependent hydrolysis of the 2-acyl groups in 3-sn-phosphoglycerides. In Pseudechis australis (Mulga snake), this protein is Basic phospholipase A2 PA-11.